The chain runs to 231 residues: 7-cyano-7-deazaguanine synthase (231 aa).

Position 8–18 (8–18 (FSGGQDSTTCL)) interacts with ATP. Positions 188, 197, 200, and 203 each coordinate Zn(2+).

This sequence belongs to the QueC family. Zn(2+) is required as a cofactor.

The catalysed reaction is 7-carboxy-7-deazaguanine + NH4(+) + ATP = 7-cyano-7-deazaguanine + ADP + phosphate + H2O + H(+). It functions in the pathway purine metabolism; 7-cyano-7-deazaguanine biosynthesis. Catalyzes the ATP-dependent conversion of 7-carboxy-7-deazaguanine (CDG) to 7-cyano-7-deazaguanine (preQ(0)). The protein is 7-cyano-7-deazaguanine synthase of Salmonella choleraesuis (strain SC-B67).